The following is a 694-amino-acid chain: Putative serine/threonine-protein kinase R679 (694 aa).

The region spanning 167–548 (ITKNKTVGKG…ITNILKHLFT (382 aa)) is the Protein kinase domain. Residues 173–181 (VGKGAAGIA) and Lys-196 each bind ATP. Catalysis depends on Asp-395, which acts as the Proton acceptor.

The protein belongs to the protein kinase superfamily. Ser/Thr protein kinase family.

The protein resides in the virion. The catalysed reaction is L-seryl-[protein] + ATP = O-phospho-L-seryl-[protein] + ADP + H(+). It catalyses the reaction L-threonyl-[protein] + ATP = O-phospho-L-threonyl-[protein] + ADP + H(+). This Acanthamoeba polyphaga (Amoeba) protein is Putative serine/threonine-protein kinase R679.